Consider the following 132-residue polypeptide: Putative RNase AF_0947 (132 aa).

Active-site residues include arginine 91 and histidine 96. The short motif at 91–98 (RNAIAHHY) is the RX(4)HXY motif element. Tyrosine 98 is modified (O-di-AMP-tyrosine).

It belongs to the HepT RNase toxin family. Homodimer, probably forms a complex with cognate antitoxin AF_0948. Modified by cognate antitoxin AF_0948; probably at least 2 successive AMPylation events occur on Tyr-98.

Functionally, probable toxic component of a putative type VII toxin-antitoxin (TA) system, probably an RNase. Probably neutralized by cognate antitoxin AF_0948. Neutralization may be due to AMPylation by AF_0948. The sequence is that of Putative RNase AF_0947 from Archaeoglobus fulgidus (strain ATCC 49558 / DSM 4304 / JCM 9628 / NBRC 100126 / VC-16).